A 497-amino-acid chain; its full sequence is MAGNKRVRDAESEQDHAETETVVKDTATTGEVEGSFSDLKLSDGTMKAIGKMGFTQMTAVQTRTIPPLLAGKDVLGAAKTGSGKTLAFLIPAIEMLHSLKFKPRNGTGVIVITPTRELALQIFGVARELMEFHSQTFGIVIGGANRRQEADKLMKGVNILIATPGRLLDHLQNTKGFIFKNLKALVIDEADRILEIGFEDEMRQIIKILPNEDRQSMLFSATQTTKVEDLARISLRPGPLFINVDSEKDTSTADGLEQGYVVCESDKRFLLLFSFLKRNQKKKVIVFLSSCNSVKYYAELLNYIDLPVLELHGKQKQQKRTNTFFEFCNAERGILVCTDVAARGLDIPAVDWIIQFDPPDDPRDYIHRVGRTARGTKGKGKSLMFLTPTELGFLRYLKAAKVPLNEYEFPTNKIANVQAQLEKLIKSNYYLHQIAKDGYRSYLQAYASHSLKTVYQIDKLDLAKVAKSYGFPVPPKVNITIGASGKTPATKKRRTKD.

Residues 1–23 (MAGNKRVRDAESEQDHAETETVV) are disordered. A Q motif motif is present at residues 34–62 (GSFSDLKLSDGTMKAIGKMGFTQMTAVQT). The region spanning 65-241 (IPPLLAGKDV…RISLRPGPLF (177 aa)) is the Helicase ATP-binding domain. 78–85 (AKTGSGKT) contributes to the ATP binding site. Positions 188–191 (DEAD) match the DEAD box motif. Positions 255-425 (GLEQGYVVCE…NVQAQLEKLI (171 aa)) constitute a Helicase C-terminal domain. The Bipartite nuclear localization signal signature appears at 267–283 (KRFLLLFSFLKRNQKKK).

This sequence belongs to the DEAD box helicase family. DDX18/HAS1 subfamily. Associates in the nucleolus with the 60S and pre-60S ribosomal subunits.

The protein localises to the nucleus. The protein resides in the nucleolus. The catalysed reaction is ATP + H2O = ADP + phosphate + H(+). ATP-dependent RNA helicase involved in 40S ribosomal subunit biogenesis. Required for the processing and cleavage of 35S pre-rRNA at sites A0, A1, and A2, leading to mature 18S rRNA. The protein is ATP-dependent RNA helicase HAS1 (HAS1) of Kluyveromyces lactis (strain ATCC 8585 / CBS 2359 / DSM 70799 / NBRC 1267 / NRRL Y-1140 / WM37) (Yeast).